Reading from the N-terminus, the 407-residue chain is MSQPTAVRLFTSESVTEGHPDKICDAISDTILDALLTADPLSRVAVETVVTTGIVHVVGEVRTSGYVEIPQLVRRKLIEIGFTSSDVGFDGRTCGVSVSIGEQSQEIADGVDTSQEARGDGHFEEDDRAGAGDQGLMFGYATNETPEFMPLPIAVAHRLARRLTQVRKEGIVPHLRPDGKTQVTFAYDADDNPSHLDTVVISTQHDPEVDSAWLEVQLREHVIDWVIRDAGLEHLATGEITVLINPSGSFILGGPMGDAGLTGRKIIVDTYGGMARHGGGAFSGKDPSKVDRSAAYAMRWVAKNIVAAGLADRAEVQVAYAIGRAKPVGLYVETFDTAREGLTDEQIQAAVSQVFDLRPAAIIRELDLLRPIYAQTAAYGHFGRTDLDLPWEATNRTGRLREALGLK.

Histidine 19 is an ATP binding site. Position 21 (aspartate 21) interacts with Mg(2+). Residue glutamate 47 participates in K(+) binding. L-methionine contacts are provided by glutamate 60 and glutamine 103. Positions 103–113 are flexible loop; sequence QSQEIADGVDT. The disordered stretch occupies residues 108–131; it reads ADGVDTSQEARGDGHFEEDDRAGA. Residues 178–180, aspartate 258, 264–265, alanine 281, and lysine 285 each bind ATP; these read DGK and RK. Residue aspartate 258 participates in L-methionine binding. Lysine 289 is an L-methionine binding site.

Belongs to the AdoMet synthase family. In terms of assembly, homotetramer; dimer of dimers. It depends on Mg(2+) as a cofactor. K(+) is required as a cofactor.

The protein resides in the cytoplasm. The catalysed reaction is L-methionine + ATP + H2O = S-adenosyl-L-methionine + phosphate + diphosphate. It functions in the pathway amino-acid biosynthesis; S-adenosyl-L-methionine biosynthesis; S-adenosyl-L-methionine from L-methionine: step 1/1. Catalyzes the formation of S-adenosylmethionine (AdoMet) from methionine and ATP. The overall synthetic reaction is composed of two sequential steps, AdoMet formation and the subsequent tripolyphosphate hydrolysis which occurs prior to release of AdoMet from the enzyme. The protein is S-adenosylmethionine synthase of Corynebacterium efficiens (strain DSM 44549 / YS-314 / AJ 12310 / JCM 11189 / NBRC 100395).